The sequence spans 153 residues: MFTIDFSDHTNLVKEDWFTQIDKLLTFAKEQENIEEEAELSVTFVDKDEIQEINKMYRDKDKVTDVISFALEEDEPEITGIEMPRVLGDIIICTDVAQEQADSYGHSFERELGFLALHGFLHLLGYDHMNEQDEKQMFGRQDQILNAYGLTRD.

Residues histidine 118, histidine 122, and histidine 128 each coordinate Zn(2+).

This sequence belongs to the endoribonuclease YbeY family. It depends on Zn(2+) as a cofactor.

Its subcellular location is the cytoplasm. In terms of biological role, single strand-specific metallo-endoribonuclease involved in late-stage 70S ribosome quality control and in maturation of the 3' terminus of the 16S rRNA. The sequence is that of Endoribonuclease YbeY from Staphylococcus saprophyticus subsp. saprophyticus (strain ATCC 15305 / DSM 20229 / NCIMB 8711 / NCTC 7292 / S-41).